The chain runs to 535 residues: Probable serine/threonine protein phosphatase 2A regulatory subunit B''delta (535 aa).

Positions 67-104 (SGTNSGSNSPLASMFPARNGPPLSPRNSTGSPRIARQR) are disordered. EF-hand domains follow at residues 174-209 (VPSF…GNML) and 387-422 (SSEP…QLHR). Ca(2+) contacts are provided by aspartate 400, aspartate 402, asparagine 404, and glutamate 411.

As to quaternary structure, PP2A consists of a common heterodimeric core enzyme, composed of a 36 kDa catalytic subunit (subunit C) and a 65 kDa constant regulatory subunit (PR65 or subunit A), that associates with a variety of regulatory subunits. Proteins that associate with the core dimer include three families of regulatory subunits B (the R2/B/PR55/B55, R3/B''/PR72/PR130/PR59 and R5/B'/B56 families) and cell signaling molecules.

Its function is as follows. Probable regulatory subunit of type 2A protein phosphatase. The polypeptide is Probable serine/threonine protein phosphatase 2A regulatory subunit B''delta (B''DELTA) (Arabidopsis thaliana (Mouse-ear cress)).